Consider the following 435-residue polypeptide: Glycine reductase complex component B subunit gamma (435 aa).

Sec-350 is a catalytic residue. Sec-350 is a non-standard amino acid (selenocysteine).

This sequence belongs to the GrdB/GrdF/GrdH family. As to quaternary structure, heterohexamer of two alpha, two beta and two gamma subunits. Component of the glycine reductase complex, together with components A and C. PB is substrate specific.

It catalyses the reaction acetyl phosphate + [thioredoxin]-disulfide + NH4(+) + H2O = [thioredoxin]-dithiol + glycine + phosphate + H(+). Its function is as follows. In the first step of glycine reductase, the substrate is bound to component PB via a Schiff base intermediate. Then the PB-activated substrate is nucleophilically attacked by the selenol anion of component PA to transform it to a carboxymethylated selenoether and the respective amine. By action of component PC, acetyl phosphate is formed, leaving component PA in its oxidized state. Finally component PA becomes reduced by the thioredoxin system to start a new catalytic cycle of reductive deamination. This Carboxydothermus hydrogenoformans (strain ATCC BAA-161 / DSM 6008 / Z-2901) protein is Glycine reductase complex component B subunit gamma (grdB).